A 461-amino-acid polypeptide reads, in one-letter code: Argininosuccinate lyase (461 aa).

This sequence belongs to the lyase 1 family. Argininosuccinate lyase subfamily.

It localises to the cytoplasm. It catalyses the reaction 2-(N(omega)-L-arginino)succinate = fumarate + L-arginine. It participates in amino-acid biosynthesis; L-arginine biosynthesis; L-arginine from L-ornithine and carbamoyl phosphate: step 3/3. The protein is Argininosuccinate lyase of Streptococcus gordonii (strain Challis / ATCC 35105 / BCRC 15272 / CH1 / DL1 / V288).